We begin with the raw amino-acid sequence, 258 residues long: Hydroxyacylglutathione hydrolase cytoplasmic (258 aa).

The Zn(2+) site is built by histidine 54 and histidine 56. Residues aspartate 58 and histidine 59 each coordinate Fe cation. 2 residues coordinate Zn(2+): histidine 112 and aspartate 135. Aspartate 135 provides a ligand contact to Fe cation. Substrate-binding positions include 144–146 (KFF) and 174–176 (HEY). Histidine 174 provides a ligand contact to Fe cation.

The protein belongs to the metallo-beta-lactamase superfamily. Glyoxalase II family. In terms of assembly, homodimer. It depends on Fe(2+) as a cofactor. Zn(2+) serves as cofactor. Requires Fe(3+) as cofactor. In terms of tissue distribution, mainly expressed in flowers and flower buds. Also detected in roots and leaves.

Its subcellular location is the cytoplasm. The catalysed reaction is an S-(2-hydroxyacyl)glutathione + H2O = a 2-hydroxy carboxylate + glutathione + H(+). Its pathway is secondary metabolite metabolism; methylglyoxal degradation; (R)-lactate from methylglyoxal: step 2/2. Thiolesterase that catalyzes the hydrolysis of S-D-lactoyl-glutathione to form glutathione and D-lactic acid. The chain is Hydroxyacylglutathione hydrolase cytoplasmic (GLX2-2) from Arabidopsis thaliana (Mouse-ear cress).